The chain runs to 368 residues: Peptide chain release factor 2 (368 aa).

Q250 carries the post-translational modification N5-methylglutamine.

It belongs to the prokaryotic/mitochondrial release factor family. Methylated by PrmC. Methylation increases the termination efficiency of RF2.

The protein localises to the cytoplasm. In terms of biological role, peptide chain release factor 2 directs the termination of translation in response to the peptide chain termination codons UGA and UAA. This chain is Peptide chain release factor 2, found in Rickettsia conorii (strain ATCC VR-613 / Malish 7).